The following is a 167-amino-acid chain: ATP synthase subunit b (167 aa).

A helical membrane pass occupies residues 8 to 28 (AEAEFWVGAGLLIFLGIVFFG).

The protein belongs to the ATPase B chain family. In terms of assembly, F-type ATPases have 2 components, F(1) - the catalytic core - and F(0) - the membrane proton channel. F(1) has five subunits: alpha(3), beta(3), gamma(1), delta(1), epsilon(1). F(0) has three main subunits: a(1), b(2) and c(10-14). The alpha and beta chains form an alternating ring which encloses part of the gamma chain. F(1) is attached to F(0) by a central stalk formed by the gamma and epsilon chains, while a peripheral stalk is formed by the delta and b chains.

The protein localises to the cell inner membrane. F(1)F(0) ATP synthase produces ATP from ADP in the presence of a proton or sodium gradient. F-type ATPases consist of two structural domains, F(1) containing the extramembraneous catalytic core and F(0) containing the membrane proton channel, linked together by a central stalk and a peripheral stalk. During catalysis, ATP synthesis in the catalytic domain of F(1) is coupled via a rotary mechanism of the central stalk subunits to proton translocation. In terms of biological role, component of the F(0) channel, it forms part of the peripheral stalk, linking F(1) to F(0). This chain is ATP synthase subunit b, found in Phenylobacterium zucineum (strain HLK1).